The sequence spans 882 residues: Translation initiation factor IF-2 (882 aa).

Positions 28 to 294 (GIRKSADDSV…SSLQQGFQKP (267 aa)) are disordered. Over residues 67–81 (STLNIPGTGGKSKSV) the composition is skewed to polar residues. The span at 92–209 (VKRDPQEAER…RMAEENKWTD (118 aa)) shows a compositional bias: basic and acidic residues. Positions 244–258 (GRGRNAKAARPKKGN) are enriched in basic residues. A compositionally biased stretch (basic and acidic residues) spans 259–272 (KHAESKADREEARA). A tr-type G domain is found at 381–550 (PRAPVVTIMG…LLQAEVLELK (170 aa)). Residues 390-397 (GHVDHGKT) are G1. A GTP-binding site is contributed by 390–397 (GHVDHGKT). Residues 415-419 (GITQH) are G2. Residues 436-439 (DTPG) are G3. GTP-binding positions include 436 to 440 (DTPGH) and 490 to 493 (NKID). The segment at 490 to 493 (NKID) is G4. Residues 526–528 (SAK) form a G5 region. The residue at position 800 (K800) is an N6-acetyllysine.

It belongs to the TRAFAC class translation factor GTPase superfamily. Classic translation factor GTPase family. IF-2 subfamily.

It is found in the cytoplasm. In terms of biological role, one of the essential components for the initiation of protein synthesis. Protects formylmethionyl-tRNA from spontaneous hydrolysis and promotes its binding to the 30S ribosomal subunits. Also involved in the hydrolysis of GTP during the formation of the 70S ribosomal complex. The protein is Translation initiation factor IF-2 of Shigella flexneri serotype 5b (strain 8401).